The sequence spans 547 residues: Inositol 1,4,5-trisphosphate receptor-interacting protein (547 aa).

The N-terminal stretch at 1 to 15 is a signal peptide; it reads MAMGLFRVCLVVVTA. Residues 16-83 lie on the Extracellular side of the membrane; that stretch reads IINHPLLFPR…EEGRQQNETR (68 aa). Asparagine 27 and asparagine 80 each carry an N-linked (GlcNAc...) asparagine glycan. Positions 32 to 82 form a coiled coil; sequence ENEEEIIRKMQAHQEKLQLEQLRLEEEVARLAAEKEALEQVAEEGRQQNET. A helical transmembrane segment spans residues 84–100; it reads VAWDLWSTLCMILFLMI. The Cytoplasmic portion of the chain corresponds to 101-547; that stretch reads EVWRQDHQEG…VPSDQPTPKS (447 aa). The segment at 109-129 is disordered; the sequence is EGPSPECLGGEEDELPGLGGA. Serine 547 carries the phosphoserine modification.

Belongs to the ITPRIP family. Interacts with ITPR. In terms of tissue distribution, detected in brain where it is concentrated in cerebellar Purkinje cells (at protein level).

The protein resides in the cell membrane. Its subcellular location is the nucleus outer membrane. Its function is as follows. Enhances Ca(2+)-mediated inhibition of inositol 1,4,5-triphosphate receptor (ITPR) Ca(2+) release. This chain is Inositol 1,4,5-trisphosphate receptor-interacting protein (ITPRIP), found in Homo sapiens (Human).